The primary structure comprises 483 residues: Altronate oxidoreductase (483 aa).

18–29 (IIQFGEGNFLRA) provides a ligand contact to NAD(+).

It belongs to the mannitol dehydrogenase family. UxaB subfamily.

It catalyses the reaction D-altronate + NAD(+) = keto-D-tagaturonate + NADH + H(+). The protein operates within carbohydrate metabolism; pentose and glucuronate interconversion. The protein is Altronate oxidoreductase of Klebsiella pneumoniae subsp. pneumoniae (strain ATCC 700721 / MGH 78578).